We begin with the raw amino-acid sequence, 150 residues long: Large ribosomal subunit protein bL9 (150 aa).

This sequence belongs to the bacterial ribosomal protein bL9 family.

Functionally, binds to the 23S rRNA. The protein is Large ribosomal subunit protein bL9 of Shewanella putrefaciens (strain CN-32 / ATCC BAA-453).